Here is a 232-residue protein sequence, read N- to C-terminus: Glycerol-3-phosphate acyltransferase (232 aa).

The next 6 helical transmembrane spans lie at 4 to 24, 56 to 76, 90 to 110, 124 to 144, 147 to 167, and 191 to 211; these read FLAI…IIAG, AVTL…VAFF, IALN…TVFA, MLIG…ILAI, TRYV…IIAI, and SLDY…IYTH.

This sequence belongs to the PlsY family. In terms of assembly, probably interacts with PlsX.

It is found in the cell inner membrane. It carries out the reaction an acyl phosphate + sn-glycerol 3-phosphate = a 1-acyl-sn-glycero-3-phosphate + phosphate. The protein operates within lipid metabolism; phospholipid metabolism. Functionally, catalyzes the transfer of an acyl group from acyl-phosphate (acyl-PO(4)) to glycerol-3-phosphate (G3P) to form lysophosphatidic acid (LPA). This enzyme utilizes acyl-phosphate as fatty acyl donor, but not acyl-CoA or acyl-ACP. The chain is Glycerol-3-phosphate acyltransferase from Chlorobaculum parvum (strain DSM 263 / NCIMB 8327) (Chlorobium vibrioforme subsp. thiosulfatophilum).